The sequence spans 31 residues: Hemocyanin subunit 2 (31 aa).

It belongs to the tyrosinase family. Hemocyanin subfamily. In terms of tissue distribution, hemolymph.

It localises to the secreted. It is found in the extracellular space. Its function is as follows. Hemocyanins are copper-containing oxygen carriers occurring freely dissolved in the hemolymph of many mollusks and arthropods. The chain is Hemocyanin subunit 2 from Maja squinado (Mediterranean spider crab).